Reading from the N-terminus, the 264-residue chain is Proliferating cell nuclear antigen (264 aa).

The DNA-binding element occupies 61–80; it reads RCDRNISMGMNLGNMAKMLK.

The protein belongs to the PCNA family.

The protein localises to the nucleus. Functionally, this protein is an auxiliary protein of DNA polymerase delta and is involved in the control of eukaryotic DNA replication by increasing the polymerase's processibility during elongation of the leading strand. The chain is Proliferating cell nuclear antigen from Daucus carota (Wild carrot).